Reading from the N-terminus, the 102-residue chain is Integration host factor subunit alpha (102 aa).

The segment at 49-70 (FGNFQLRTKPQRPGRNPKTGEE) is disordered.

Belongs to the bacterial histone-like protein family. As to quaternary structure, heterodimer of an alpha and a beta chain.

In terms of biological role, this protein is one of the two subunits of integration host factor, a specific DNA-binding protein that functions in genetic recombination as well as in transcriptional and translational control. This is Integration host factor subunit alpha from Nitrosomonas europaea (strain ATCC 19718 / CIP 103999 / KCTC 2705 / NBRC 14298).